The sequence spans 1552 residues: MIMTANNDMAVRESVVVTEGASSTPELWQMLGSRDQPTNITPRVRITDVDHKQLHSSANLVSARALQQLTKSLHEGICSTALEDDSQSSSAYYSTYASTPRSLSPNLEAVPSDDGIPDLQPQFEAVERASFAQERIWFLHEYLTDPTTFNVTMAYAVQGPLQPAELATAFRAMSDRHESLRTAFFLDSRDGEPQLFQGILPETQIEISIHTIDSTQVVDEVYASVRDHVYDLPRGKTMKVAILTLTPTTHFLVLGFHHIALDGFSAQIFIKDLQLIYSTGQILPPAPRYRDYTLLQRQSLANDTYRESLDFWKSKLANLPPPMPLFAFSRVAARKPLNSYRVHSVERTIGISLASKIKDTAHKVGGTTSFFLYLTALRELVFRLLGHAQRDICLGISDAGRADKEALQVVGMFVNMLPLQFRAARPGQSFRDLLATTTRQVRTALTHAAVPYQVLLDELAVQRSPSENPLFQILLNYKMGSTEEATLGHCRAHSLRMDDARTGLDLVIEVEEFVDGNFQVAVRGQEYLYGEEGLEFILSSLVTILEEVTLRPSMPVANLAIFDEKSITHALELSRGEHVFTAEHLLTVVHLFDRHCKAHPRDVAVKQADGQFLSYGELQGRAQELARRLQELEGSTAVVVACKPSLDTIVSIVGIHYAGCTYVPVDIEHPEERLRTIVEDCKPRAILYHADTQDLAVALAGGAIAVPTPQSGMDKAFPIKASVNDTAYILYTSGSTGKPKGVIVSHGNLTCQILSMRRTATLGKETVLHQSGVAFDASIDCVYAALAGQGTLVMAPPEVRRDPVQLASLMAREQITYTQMTSSEYHNLVVYGAEHLKQCVTYRNAFCGGEKFLSSLIPLFRALELPALRVWNRYGPTEITVSSSMQMIVGADGLNRSTELIPCGRPLTNYSVFILDEQRRPVPAGVPGEICIGGGGVAQGYLNNARLTASKFVKNIYASEDDVRRGWDRLYRTGDRGYLLSDGSLVFLGRMEGSAQVKIRGQRVELDEIETAIVATSEGRVLSAGVCVKGDNADAVLAAYVVLRPDVQVDSLSSLVASLARSLPLPRYMRPSSFVAVGRLPHNTSGKLDRQALSKLSGTPIAIETNNHPAPLGVEEEVMAKAWREVLPGEAVLSAESNFFDVGGNSLLLVRLQKVIEELTGKSVALTELFSTPGMSAMARLLQPQEATRETTEVDWESETQLTPSLLSAIQTSSRCSPSSEVEVILTGATGFLGRTLLQQLLAHPRIAHVHCLAIRNSSVTRASLTSNPDHAAKLTLYHGDLSHPTLSLNEETISSLSNRIGLVIHNGASVSFLKSYSTLRAPNVHSSRFLLQLSIERGIPFHFVSTGGVVNLTGQPTWPPVSVRNYPPPGEQGYIASKWASERLIENAAEALHLRGVHLPVVVHRPASIVARQPGTPGTSQSEPPAMDIMHNMVQYARIMQCFPATEGVNWRFDFVGVDAVASGILASALGEEDESEGVKYVHHCNERKLSPRELKKELEEEAGCVFEEVEVGEWVRRAKECGMDGLVAATLVDLMERQRGVVFTEMGLDC.

The interval 129–564 is condensation; that stretch reads ASFAQERIWF…PVANLAIFDE (436 aa). Residues 594 to 999 are adenylation; sequence RHCKAHPRDV…RMEGSAQVKI (406 aa). Residues 1110 to 1186 form the Carrier domain; it reads APLGVEEEVM…AMARLLQPQE (77 aa). At S1146 the chain carries O-(pantetheine 4'-phosphoryl)serine. A thiolester reductase (R) domain region spans residues 1226–1464; sequence LTGATGFLGR…DFVGVDAVAS (239 aa).

The protein belongs to the NRP synthetase family.

The protein operates within secondary metabolite biosynthesis. Nonribosomal peptide synthetase; part of the cluster that mediates the biosynthesis of acurin A, a highly reduced polyketide coupled to a serine via a peptide bond. The activities of the highly reducing polyketide synthase acrA and the nonribosomal peptide synthetase acrB are collectively responsible for the synthesis of the acurin A core structure with a heptaketide backbone produced by acrA covalently fused to a L-serine by acrB. After the formation of the PK-NRP hybrid product, it is detached from acrB by reductive release to set up the formation of the lactam ring by aldol condensation. The hydrolyase acrC then catalyzes water loss to generate a double bond in the ring. This double bond is probably reduced, which is followed by three oxidations at C-22 to generate the carboxylic acid moiety, involving probably the FAD-binding monooxygenase acrE and the cytochrome P450 monooxygenases acrD and acrF. Finally, a last methylation step performed by the O-methyltransferase acrG leads to the production of acurin A. In Aspergillus aculeatus (strain ATCC 16872 / CBS 172.66 / WB 5094), this protein is Nonribosomal peptide synthetase acrB.